A 229-amino-acid chain; its full sequence is MAHRRRCLLLLLAVLLPAMAARGDPDAVQDFCVPDAGRGRPVELAMLPAYPCRSPANLTAGDFAFSGVRAAGNFSPETGFAGVSVTPAQFPGLHTLGMSFARADLSAAGGVNPPHYHPRATETALVLAGRVYAGFVDSGGRLFAKVLEQGEVMVFPRAMVHFQLNVGDTPATVYGAFNSENPGIVRIPATVFGSGIREAVLERAFGLTPAELRRLEKRFGPPKKAEMED.

Positions 1 to 23 (MAHRRRCLLLLLAVLLPAMAARG) are cleaved as a signal peptide. Residues Cys32 and Cys52 are joined by a disulfide bond. An N-linked (GlcNAc...) asparagine glycan is attached at Asn57. The 148-residue stretch at 66 to 213 (SGVRAAGNFS…AFGLTPAELR (148 aa)) folds into the Cupin type-1 domain. The Mn(2+) site is built by His115, His117, Glu122, and His161.

It belongs to the germin family. Oligomer (believed to be a pentamer but probably hexamer).

The protein localises to the secreted. It localises to the extracellular space. It is found in the apoplast. In terms of biological role, may play a role in plant defense. Probably has no oxalate oxidase activity even if the active site is conserved. In Oryza sativa subsp. japonica (Rice), this protein is Germin-like protein 2-4.